Reading from the N-terminus, the 552-residue chain is MIRSQLKELLDRCFQEGVDNGSWSDRGAGKYTVELPKHEGQGDFSTNIALVLAGIEKRNPRELAGIVAEKLGLETAIVAGVEIAGPGFVNITIQPAVWHGVLAEVFSAGENFGRSQVGAGRKVMVEFVSANPTGPLSIGHGRQAILGDSIARLLEATNHDVFREYYYNNAGRQMRVLGESTRARYLELIGAEFSFPEDGYQGEYIIDIAQSLVDEHGEKLKDEPDVEPFKDQAEKAIFKDISGTLERMGIHFDNYYNERSLYENGHIDSVVQELRDKGLVYEKDDAVWFETTKLGQEKDRVIIKSTGEPTYRLPDIAYHREKFKRNFDWLIDIFGSDHIATVPDVLSGVEALGYDASKVTVLLHQFVTLTRDGKQVKMSTRKANFVTVDELIDVVGEDVLRFFYMLRKADSQLEFDLDLATSQSQDNPVYYVQYAHARLCSILAQSGERGIVPAEVGSSLLQRLQEPEELALLKTLSGFPAAIEGSALDLAPHKFIHYLMEFAGQFHSYYNKHKVITEDLELSQARLCLIQALQLTLQNGLHIIGLTAPKSM.

A 'HIGH' region motif is present at residues alanine 130–histidine 140.

The protein belongs to the class-I aminoacyl-tRNA synthetase family. In terms of assembly, monomer.

The protein resides in the cytoplasm. It carries out the reaction tRNA(Arg) + L-arginine + ATP = L-arginyl-tRNA(Arg) + AMP + diphosphate. This chain is Arginine--tRNA ligase, found in Desulfotalea psychrophila (strain LSv54 / DSM 12343).